The primary structure comprises 311 residues: Putative S-adenosyl-L-methionine-dependent methyltransferase MRA_0152 (311 aa).

Residues aspartate 135 and 164 to 165 contribute to the S-adenosyl-L-methionine site; that span reads DL.

It belongs to the UPF0677 family.

Functionally, exhibits S-adenosyl-L-methionine-dependent methyltransferase activity. The protein is Putative S-adenosyl-L-methionine-dependent methyltransferase MRA_0152 of Mycobacterium tuberculosis (strain ATCC 25177 / H37Ra).